The primary structure comprises 306 residues: D-alanine--D-alanine ligase (306 aa).

Residues 101–303 (KYLWQGCGLP…FSQLVARILE (203 aa)) form the ATP-grasp domain. 134 to 189 (IDALGLPLFVKPSREGSSVGISRVNQASELQAALQEAFRFDDEVLVEAFLSGPEYT) contacts ATP. D257, E270, and N272 together coordinate Mg(2+).

It belongs to the D-alanine--D-alanine ligase family. Mg(2+) serves as cofactor. It depends on Mn(2+) as a cofactor.

The protein localises to the cytoplasm. The catalysed reaction is 2 D-alanine + ATP = D-alanyl-D-alanine + ADP + phosphate + H(+). The protein operates within cell wall biogenesis; peptidoglycan biosynthesis. In terms of biological role, cell wall formation. The polypeptide is D-alanine--D-alanine ligase (Erwinia tasmaniensis (strain DSM 17950 / CFBP 7177 / CIP 109463 / NCPPB 4357 / Et1/99)).